Reading from the N-terminus, the 110-residue chain is Spermatid nuclear transition protein 3 (110 aa).

The disordered stretch occupies residues 80-110; the sequence is RSCAREKLNQSRKRYQNMRQSQRRGQNQKRR.

It localises to the nucleus. It is found in the chromosome. Its function is as follows. Involved in nuclear basic protein transition: histones are replaced by spermatid specific proteins which are themselves replaced by protamines in late spermatids. The polypeptide is Spermatid nuclear transition protein 3 (Ovis aries (Sheep)).